The primary structure comprises 462 residues: L-seryl-tRNA(Sec) selenium transferase (462 aa).

Lys294 bears the N6-(pyridoxal phosphate)lysine mark.

Belongs to the SelA family. Homodecamer; pentamer of dimers. Binds only one seryl-tRNA(Sec) per dimer. The cofactor is pyridoxal 5'-phosphate.

The protein resides in the cytoplasm. It carries out the reaction L-seryl-tRNA(Sec) + selenophosphate + H(+) = L-selenocysteinyl-tRNA(Sec) + phosphate. It participates in aminoacyl-tRNA biosynthesis; selenocysteinyl-tRNA(Sec) biosynthesis; selenocysteinyl-tRNA(Sec) from L-seryl-tRNA(Sec) (bacterial route): step 1/1. In terms of biological role, converts seryl-tRNA(Sec) to selenocysteinyl-tRNA(Sec) required for selenoprotein biosynthesis. This is L-seryl-tRNA(Sec) selenium transferase from Yersinia pseudotuberculosis serotype O:1b (strain IP 31758).